The sequence spans 190 residues: MAAWGRRRLGPGGGGSRERVSLSATDCYIVHEIYSGENAQDQFEYELEQALEAQYKYIVIEPTRIGDETARWITVGNCLHKTAVLAGTACLFTPLALPLDYSHYISLPAGVLSLACCTLYGISWQFDPCCKYQVEYDAYKLSRLPLHTLTSSTPVVLVRKDDLHRKRLHNTIALAALVYCVKKVYELYAV.

2 consecutive transmembrane segments (helical) span residues 84–100 and 107–124; these read VLAG…LPLD and LPAG…GISW.

This sequence belongs to the TMEM11 family. Associates with the mitochondrial contact site and cristae organizing system (MICOS) complex, composed of at least MICOS10/MIC10, CHCHD3/MIC19, CHCHD6/MIC25, APOOL/MIC27, IMMT/MIC60, APOO/MIC23/MIC26 and QIL1/MIC13. This complex was also known under the names MINOS or MitOS complex. The MICOS complex associates with mitochondrial outer membrane proteins SAMM50, MTX1, MTX2 and DNAJC11, mitochondrial inner membrane protein TMEM11 and with HSPA9. Interacts with IMMT/MIC60.

The protein resides in the mitochondrion inner membrane. In terms of biological role, plays a role in mitochondrial morphogenesis. The polypeptide is Transmembrane protein 11, mitochondrial (Tmem11) (Mus musculus (Mouse)).